Consider the following 537-residue polypeptide: ESX-2 secretion system protein EccE2 (537 aa).

The chain crosses the membrane as a helical span at residues 31–51; that stretch reads ALGGQLGAVMAVVVGVALVFV.

This sequence belongs to the EccE family. In terms of assembly, could be part of the ESX-2 / type VII secretion system (T7SS), which is composed of cytosolic and membrane components.

The protein localises to the cell membrane. This is ESX-2 secretion system protein EccE2 (eccE2) from Mycobacterium tuberculosis (strain CDC 1551 / Oshkosh).